Here is a 466-residue protein sequence, read N- to C-terminus: Purple acid phosphatase 25 (466 aa).

Positions 1 to 21 (MRMNKILLVFVFLSIATVINS) are cleaved as a signal peptide. Asp164 provides a ligand contact to Fe cation. Asn172 is a glycosylation site (N-linked (GlcNAc...) asparagine). Fe cation-binding residues include Asp192 and Tyr195. Asp192 serves as a coordination point for Zn(2+). Zn(2+) contacts are provided by Asn229 and His314. Substrate is bound at residue Asn229. Residue His324 is the Proton donor of the active site. His351 is a Zn(2+) binding site. Position 351-353 (351-353 (HVH)) interacts with substrate. His353 serves as a coordination point for Fe cation. Asn367 and Asn424 each carry an N-linked (GlcNAc...) asparagine glycan.

It belongs to the metallophosphoesterase superfamily. Purple acid phosphatase family. Homodimer. The cofactor is Fe cation. It depends on Zn(2+) as a cofactor. Specifically expressed in flowers.

Its subcellular location is the secreted. The enzyme catalyses a phosphate monoester + H2O = an alcohol + phosphate. The chain is Purple acid phosphatase 25 (PAP25) from Arabidopsis thaliana (Mouse-ear cress).